The chain runs to 440 residues: Transposon Ty1-JR1 Gag polyprotein (440 aa).

Residues 1 to 16 show a composition bias toward low complexity; that stretch reads MESQQLSQHSHISHGS. 3 disordered regions span residues 1–93, 126–173, and 352–440; these read MESQ…MMTQ, PQSQ…RPPP, and GSRN…PGTY. Composition is skewed to polar residues over residues 48 to 60 and 127 to 152; these read TKAN…TPAS and QSQF…GNTF. Positions 153 to 165 are enriched in low complexity; it reads TDSSSADSDMTST. Residues 299–401 are RNA-binding; sequence NNGIHINNKV…NSKSKTARAH (103 aa). The segment covering 402–418 has biased composition (low complexity); that stretch reads NVSTSNNSPSTDNDSIS. Ser416 bears the Phosphoserine mark. The segment covering 419–428 has biased composition (polar residues); that stretch reads KSTTEPIQLN. Residues 429-440 show a composition bias toward basic and acidic residues; the sequence is NKHDLHLRPGTY.

As to quaternary structure, homotrimer.

The protein localises to the cytoplasm. Functionally, capsid protein (CA) is the structural component of the virus-like particle (VLP), forming the shell that encapsulates the retrotransposons dimeric RNA genome. The particles are assembled from trimer-clustered units and there are holes in the capsid shells that allow for the diffusion of macromolecules. CA also has nucleocapsid-like chaperone activity, promoting primer tRNA(i)-Met annealing to the multipartite primer-binding site (PBS), dimerization of Ty1 RNA and initiation of reverse transcription. In Saccharomyces cerevisiae (strain ATCC 204508 / S288c) (Baker's yeast), this protein is Transposon Ty1-JR1 Gag polyprotein (TY1A-JR1).